The chain runs to 86 residues: Insulin-related peptide 2 (86 aa).

Positions 1 to 19 are cleaved as a signal peptide; that stretch reads MKFYIVFALILACAACVSS. Positions 20–43 are excised as a propeptide; the sequence is QEGTNFYCGRQLSRTLALVCWGAE. At arginine 63 the chain carries Arginine amide. Residues 67–86 constitute a propeptide that is removed on maturation; sequence GPVDECCLKPCSIEEMLTYC.

This sequence belongs to the insulin family. DAGWWVPPQSARALGGGR-amide: Expressed in corpora cardiaca (CC), corpora allata (CA), antennal lobe (AL) and gnathal ganglion (GNG) (at protein level). Expression in CC and CA detected in most animals, in AL in some animals and in GNG in few animals (at protein level).

It is found in the secreted. This Agrotis ipsilon (Black cutworm moth) protein is Insulin-related peptide 2.